Consider the following 168-residue polypeptide: S-ribosylhomocysteine lyase (168 aa).

Fe cation contacts are provided by histidine 54, histidine 58, and cysteine 128.

The protein belongs to the LuxS family. As to quaternary structure, homodimer. Fe cation serves as cofactor.

It catalyses the reaction S-(5-deoxy-D-ribos-5-yl)-L-homocysteine = (S)-4,5-dihydroxypentane-2,3-dione + L-homocysteine. In terms of biological role, involved in the synthesis of autoinducer 2 (AI-2) which is secreted by bacteria and is used to communicate both the cell density and the metabolic potential of the environment. The regulation of gene expression in response to changes in cell density is called quorum sensing. Catalyzes the transformation of S-ribosylhomocysteine (RHC) to homocysteine (HC) and 4,5-dihydroxy-2,3-pentadione (DPD). In Histophilus somni (strain 129Pt) (Haemophilus somnus), this protein is S-ribosylhomocysteine lyase.